We begin with the raw amino-acid sequence, 261 residues long: Ribosomal RNA small subunit methyltransferase A (261 aa).

S-adenosyl-L-methionine-binding residues include Asn11, Leu13, Gly38, Glu59, Asp84, and Ser106.

This sequence belongs to the class I-like SAM-binding methyltransferase superfamily. rRNA adenine N(6)-methyltransferase family. RsmA subfamily.

Its subcellular location is the cytoplasm. The catalysed reaction is adenosine(1518)/adenosine(1519) in 16S rRNA + 4 S-adenosyl-L-methionine = N(6)-dimethyladenosine(1518)/N(6)-dimethyladenosine(1519) in 16S rRNA + 4 S-adenosyl-L-homocysteine + 4 H(+). Specifically dimethylates two adjacent adenosines (A1518 and A1519) in the loop of a conserved hairpin near the 3'-end of 16S rRNA in the 30S particle. May play a critical role in biogenesis of 30S subunits. The protein is Ribosomal RNA small subunit methyltransferase A of Wigglesworthia glossinidia brevipalpis.